A 273-amino-acid polypeptide reads, in one-letter code: Putative pyruvate, phosphate dikinase regulatory protein (273 aa).

153–160 lines the ADP pocket; it reads GVSRTSKT.

The protein belongs to the pyruvate, phosphate/water dikinase regulatory protein family. PDRP subfamily.

The enzyme catalyses N(tele)-phospho-L-histidyl/L-threonyl-[pyruvate, phosphate dikinase] + ADP = N(tele)-phospho-L-histidyl/O-phospho-L-threonyl-[pyruvate, phosphate dikinase] + AMP + H(+). It carries out the reaction N(tele)-phospho-L-histidyl/O-phospho-L-threonyl-[pyruvate, phosphate dikinase] + phosphate + H(+) = N(tele)-phospho-L-histidyl/L-threonyl-[pyruvate, phosphate dikinase] + diphosphate. Its function is as follows. Bifunctional serine/threonine kinase and phosphorylase involved in the regulation of the pyruvate, phosphate dikinase (PPDK) by catalyzing its phosphorylation/dephosphorylation. This Sinorhizobium fredii (strain NBRC 101917 / NGR234) protein is Putative pyruvate, phosphate dikinase regulatory protein.